The chain runs to 1287 residues: Pullulanase A (1287 aa).

The N-terminal stretch at 1-44 (MRKTPSHTEKKMVYSIRSLKNGTGSVLIGASLVLLAMATPTISS) is a signal peptide. Residues 42 to 139 (ISSDESTPTT…VTTETKAEEP (98 aa)) are disordered. Residues 48–61 (TPTTNEPNNRNTTT) are compositionally biased toward low complexity. Positions 79–90 (DISSPGNANASL) are enriched in polar residues. Low complexity-rich tracts occupy residues 99-113 (TEPT…DPAP) and 122-133 (EPTTSTSPVTTE). Residues 163–165 (WTW), Trp175, Asp221, 270–272 (WYW), Trp283, Lys325, and Asn330 each bind substrate. The Ca(2+) site is built by Ser668 and Tyr670. Residues 674–675 (YD) and Phe750 contribute to the substrate site. Asp785 (nucleophile) is an active-site residue. The active-site Proton donor is Glu814. A substrate-binding site is contributed by Trp816. Ca(2+)-binding residues include Met835, Thr838, and Asp839. Substrate is bound by residues Asp846, Arg849, and Tyr856. Ca(2+) contacts are provided by Asp889 and Asp893. Substrate contacts are provided by residues Asn903, Lys976, and 996-998 (DSY). Asp999 is a Ca(2+) binding site. The segment at 1147–1255 (VSQNGTSHES…TPDRQAELPN (109 aa)) is disordered. The segment covering 1156–1203 (STAEEKPDSTPSKPEHQNEASHPAHQDPAPEARPDSTKPDAKVADAEN) has biased composition (basic and acidic residues). Low complexity predominate over residues 1212–1225 (SQAEQPAQEAQASS). A compositionally biased stretch (basic and acidic residues) spans 1228–1239 (EAVRKESVENSS). The short motif at 1253–1257 (LPNTG) is the LPXTG sorting signal element. Thr1256 carries the post-translational modification Pentaglycyl murein peptidoglycan amidated threonine. The propeptide at 1257–1287 (GIKNENKLLFAGISLLALLGLGFLLKNKKEN) is removed by sortase.

It belongs to the glycosyl hydrolase 13 family.

The protein resides in the secreted. The protein localises to the cell wall. Its subcellular location is the cell surface. It catalyses the reaction Hydrolysis of (1-&gt;6)-alpha-D-glucosidic linkages in pullulan, amylopectin and glycogen, and in the alpha- and beta-limit dextrins of amylopectin and glycogen.. With respect to regulation, inhibited by 4-O-alpha-D-glucopyranosylmoranoline (G1M). Virulence factor. Involved in the degradation of glycogen of the mammalian host cells. Hydrolyzes the alpha-1,6-branchpoints of glycogen. Hydrolyzes pullulan. Does not hydrolyze dextran. Binds to mouse lung alveolar type II cells that are rich in glycogen stores. Is an alpha-glucan-specific carbohydrate-binding protein, which binds to amylose (pure alpha-(1,4)-linked glucose), amylopectin (alpha-(1,4)-linked glucose with alpha-(1,6) branch points), pullulan (linear polymer of mixed alpha-(1,4)- and alpha-(1,6)-linked glucose) and glycogen (similar to amylopectin with more frequent alpha-(1,6) branch points) in vitro. Does not bind to dextran (a linear polymer of alpha-(1,6)-linked glucose). This chain is Pullulanase A, found in Streptococcus pneumoniae.